Reading from the N-terminus, the 889-residue chain is Low-affinity potassium transport protein (889 aa).

The Cytoplasmic portion of the chain corresponds to methionine 1–proline 51. Residues asparagine 52–tyrosine 73 form a helical membrane-spanning segment. Residues proline 74 to phenylalanine 80 lie on the Extracellular side of the membrane. The helical transmembrane segment at isoleucine 81–threonine 101 threads the bilayer. At asparagine 102–glutamine 109 the chain is on the cytoplasmic side. The helical transmembrane segment at isoleucine 110–phenylalanine 130 threads the bilayer. Residues valine 131–cysteine 464 are Extracellular-facing. The segment at arginine 189–aspartate 244 is disordered. Over residues serine 207–serine 219 the composition is skewed to low complexity. Residues asparagine 216, asparagine 233, and asparagine 265 are each glycosylated (N-linked (GlcNAc...) asparagine). A helical membrane pass occupies residues isoleucine 465–threonine 487. The Cytoplasmic segment spans residues arginine 488–glycine 499. A helical transmembrane segment spans residues valine 500–leucine 521. At threonine 522 to aspartate 524 the chain is on the extracellular side. The helical transmembrane segment at serine 525–isoleucine 545 threads the bilayer. The Cytoplasmic segment spans residues glycine 546–threonine 548. Residues glycine 549–serine 569 form a helical membrane-spanning segment. Residues glutamine 570–arginine 584 lie on the Extracellular side of the membrane. A helical membrane pass occupies residues cysteine 585–leucine 605. Over asparagine 606–aspartate 609 the chain is Cytoplasmic. Residues tryptophan 610 to tyrosine 630 traverse the membrane as a helical segment. Topologically, residues arginine 631 to proline 657 are extracellular. A helical membrane pass occupies residues serine 658–isoleucine 678. Over arginine 679–arginine 743 the chain is Cytoplasmic. Residues aspartate 705–proline 733 are disordered. A helical transmembrane segment spans residues glutamine 744–glycine 764. Residues arginine 765–asparagine 776 lie on the Extracellular side of the membrane. Residues valine 777–tyrosine 797 form a helical membrane-spanning segment. Residues proline 798–histidine 889 lie on the Cytoplasmic side of the membrane.

The protein belongs to the TrkH potassium transport family.

It is found in the membrane. In terms of biological role, this protein is required for low-affinity potassium transport. The polypeptide is Low-affinity potassium transport protein (TRK2) (Saccharomyces cerevisiae (strain ATCC 204508 / S288c) (Baker's yeast)).